We begin with the raw amino-acid sequence, 393 residues long: Glycerol-3-phosphate dehydrogenase [NAD(+)] 1 (393 aa).

NAD(+) is bound by residues 45–50 (GSGNWG), F133, K157, and A190. A substrate-binding site is contributed by K157. The active-site Proton acceptor is the K250. Residues R316 and Q345 each coordinate NAD(+). Residue 316-317 (RN) participates in substrate binding.

Belongs to the NAD-dependent glycerol-3-phosphate dehydrogenase family.

The enzyme catalyses sn-glycerol 3-phosphate + NAD(+) = dihydroxyacetone phosphate + NADH + H(+). The sequence is that of Glycerol-3-phosphate dehydrogenase [NAD(+)] 1 (gpd1) from Cyberlindnera jadinii (Torula yeast).